Reading from the N-terminus, the 453-residue chain is Keratin, type I cytoskeletal 15 (453 aa).

The segment at 1 to 102 (MATTLLQTSS…GGDGGLLSGN (102 aa)) is head. Residues S16, S17, S34, S48, and S56 each carry the phosphoserine modification. The interval 103–138 (EKITMQNLNDRLASYLEKVRALEEANADLEVKIRDW) is coil 1A. An IF rod domain is found at 103–415 (EKITMQNLND…SLLEGQDARM (313 aa)). The segment at 139–157 (YQRQSPTSPERDYSPYFKT) is linker 1. The interval 158-249 (TDELRDKILA…KNHEEEMKEF (92 aa)) is coil 1B. Residues 250 to 269 (SNQLAGQVNVEMDAAPGVDL) are linker 12. The segment at 270-411 (TRVLSEMREQ…ATYHSLLEGQ (142 aa)) is coil 2. Residue K298 forms a Glycyl lysine isopeptide (Lys-Gly) (interchain with G-Cter in SUMO2) linkage. Residues T299 and T321 each carry the phosphothreonine modification. Positions 412–453 (DARMAGIGTGEASLGGGGGGKVRINVEESVDGKVVSSRKREI) are tail. Residue K444 forms a Glycyl lysine isopeptide (Lys-Gly) (interchain with G-Cter in SUMO1); alternate linkage. Residue K444 forms a Glycyl lysine isopeptide (Lys-Gly) (interchain with G-Cter in SUMO2); alternate linkage.

The protein belongs to the intermediate filament family. As to quaternary structure, heterotetramer of two type I and two type II keratins. Interacts with NOD2. Expressed in the basal cell layers of several stratified epithelia including esophagus, tongue, stomach, epidermis and hair follicle. In the hair follicle, expression is detected mainly in the basal layer of the outer root sheath (ORS), except just above the follicle bulb where it occurs throughout its thickness. Low expression levels are seen in the single layer of ORS cells around the base of the follicle which increases in the palisade-like cells of the bulb. Also expressed in the basal cells of the sebaceous glands, and expression in the epidermis occurs in a punctate pattern.

The polypeptide is Keratin, type I cytoskeletal 15 (Ovis aries (Sheep)).